Here is a 319-residue protein sequence, read N- to C-terminus: tRNA-cytidine(32) 2-sulfurtransferase (319 aa).

Positions 43 to 48 match the PP-loop motif motif; the sequence is SGGKDS. Residues Cys118, Cys121, and Cys209 each contribute to the [4Fe-4S] cluster site.

Belongs to the TtcA family. In terms of assembly, homodimer. Requires Mg(2+) as cofactor. [4Fe-4S] cluster is required as a cofactor.

Its subcellular location is the cytoplasm. It carries out the reaction cytidine(32) in tRNA + S-sulfanyl-L-cysteinyl-[cysteine desulfurase] + AH2 + ATP = 2-thiocytidine(32) in tRNA + L-cysteinyl-[cysteine desulfurase] + A + AMP + diphosphate + H(+). The protein operates within tRNA modification. Its function is as follows. Catalyzes the ATP-dependent 2-thiolation of cytidine in position 32 of tRNA, to form 2-thiocytidine (s(2)C32). The sulfur atoms are provided by the cysteine/cysteine desulfurase (IscS) system. The polypeptide is tRNA-cytidine(32) 2-sulfurtransferase (Neisseria meningitidis serogroup A / serotype 4A (strain DSM 15465 / Z2491)).